Here is a 207-residue protein sequence, read N- to C-terminus: Small ribosomal subunit protein uS4 (207 aa).

Residues 98–164 (RRLDNVVYRM…AKFKNLVEVN (67 aa)) form the S4 RNA-binding domain.

The protein belongs to the universal ribosomal protein uS4 family. Part of the 30S ribosomal subunit. Contacts protein S5. The interaction surface between S4 and S5 is involved in control of translational fidelity.

Its function is as follows. One of the primary rRNA binding proteins, it binds directly to 16S rRNA where it nucleates assembly of the body of the 30S subunit. With S5 and S12 plays an important role in translational accuracy. The protein is Small ribosomal subunit protein uS4 of Clostridioides difficile (strain 630) (Peptoclostridium difficile).